The following is a 109-amino-acid chain: Putative ankyrin repeat protein L482 (109 aa).

ANK repeat units lie at residues 1–26 (YLTEISGKGHIEIVKCLVNLGANITT), 27–56 (NNNYAIIQASEKGHLEVVKYLVGQNANIRS), 57–86 (ENNLAVRLASGNGHLEVVEYLVNLGADIRS), and 88–109 (NNYAIQSASQNGHLEVIEYLVA).

The protein is Putative ankyrin repeat protein L482 of Acanthamoeba polyphaga (Amoeba).